The primary structure comprises 110 residues: Prothymosin alpha (110 aa).

M1 carries the N-acetylmethionine modification. The tract at residues M1–D110 is disordered. Residue S2 is modified to N-acetylserine; in Prothymosin alpha, N-terminally processed. Residue S2 is modified to Phosphoserine. Residue T8 is modified to Phosphothreonine. 2 positions are modified to phosphoserine: S9 and S10. Phosphothreonine is present on residues T13 and T14. A compositionally biased stretch (basic and acidic residues) spans T13–R31. At K15 the chain carries N6-acetyllysine; alternate. An N6-succinyllysine; alternate modification is found at K15. Positions E42–E83 are enriched in acidic residues. Positions D100–D110 are enriched in basic and acidic residues. T101 bears the Phosphothreonine mark. K102 bears the N6-acetyllysine; alternate mark. Residue K102 forms a Glycyl lysine isopeptide (Lys-Gly) (interchain with G-Cter in SUMO2); alternate linkage. Residue T106 is modified to Phosphothreonine.

Belongs to the pro/parathymosin family. As to quaternary structure, interacts with NUPR1; regulates apoptotic process. Post-translationally, covalently linked to a small RNA of about 20 nucleotides.

The protein localises to the nucleus. Its function is as follows. Prothymosin alpha may mediate immune function by conferring resistance to certain opportunistic infections. The protein is Prothymosin alpha (PTMA) of Pongo abelii (Sumatran orangutan).